Reading from the N-terminus, the 429-residue chain is Threonine synthase (429 aa).

An N6-(pyridoxal phosphate)lysine modification is found at K107.

The protein belongs to the threonine synthase family. Requires pyridoxal 5'-phosphate as cofactor.

It carries out the reaction O-phospho-L-homoserine + H2O = L-threonine + phosphate. Its pathway is amino-acid biosynthesis; L-threonine biosynthesis; L-threonine from L-aspartate: step 5/5. Its function is as follows. Catalyzes the gamma-elimination of phosphate from L-phosphohomoserine and the beta-addition of water to produce L-threonine. The sequence is that of Threonine synthase (thrC) from Serratia marcescens.